A 355-amino-acid polypeptide reads, in one-letter code: S-adenosylmethionine:tRNA ribosyltransferase-isomerase (355 aa).

This sequence belongs to the QueA family. Monomer.

The protein localises to the cytoplasm. It catalyses the reaction 7-aminomethyl-7-carbaguanosine(34) in tRNA + S-adenosyl-L-methionine = epoxyqueuosine(34) in tRNA + adenine + L-methionine + 2 H(+). Its pathway is tRNA modification; tRNA-queuosine biosynthesis. Its function is as follows. Transfers and isomerizes the ribose moiety from AdoMet to the 7-aminomethyl group of 7-deazaguanine (preQ1-tRNA) to give epoxyqueuosine (oQ-tRNA). The chain is S-adenosylmethionine:tRNA ribosyltransferase-isomerase from Burkholderia ambifaria (strain ATCC BAA-244 / DSM 16087 / CCUG 44356 / LMG 19182 / AMMD) (Burkholderia cepacia (strain AMMD)).